The sequence spans 355 residues: Meiotic coiled-coil protein 4 (355 aa).

Residues glutamine 298 to asparagine 338 are a coiled coil.

It localises to the cytoplasm. Its function is as follows. Has a role in meiosis. The protein is Meiotic coiled-coil protein 4 (mcp4) of Schizosaccharomyces pombe (strain 972 / ATCC 24843) (Fission yeast).